Here is a 375-residue protein sequence, read N- to C-terminus: Solute carrier family 35 member F2 (375 aa).

An N-acetylmethionine modification is found at Met1. Ser5, Ser22, Ser25, and Ser28 each carry phosphoserine. 10 helical membrane-spanning segments follow: residues 39 to 59 (ILKT…TAIT), 73 to 93 (MLQS…MLAF), 108 to 126 (WWKY…YLIV), 136 to 156 (SVQL…WFIL), 165 to 185 (FIAV…DILA), 195 to 215 (VLIG…SNVC), 227 to 247 (EFLG…LLIV), 263 to 283 (LLFV…PLVI), 290 to 310 (SVNL…LFLF), and 314 to 334 (FSGL…LYCS). A Phosphoserine modification is found at Ser372.

It belongs to the SLC35F solute transporter family.

Its subcellular location is the membrane. Putative solute transporter. The chain is Solute carrier family 35 member F2 (Slc35f2) from Mus musculus (Mouse).